Reading from the N-terminus, the 267-residue chain is UDP-glucose:undecaprenyl-phosphate glucose-1-phosphate transferase (267 aa).

Residues 83–103 form a helical membrane-spanning segment; it reads VAAALLTALFAPLLLLAALAI.

The protein belongs to the bacterial sugar transferase family.

The protein resides in the cell membrane. It carries out the reaction di-trans,octa-cis-undecaprenyl phosphate + UDP-alpha-D-glucose = alpha-D-glucosyl di-trans,octa-cis-undecaprenyl diphosphate + UMP. Its function is as follows. Is likely the initiating enzyme for holdfast polysaccharide synthesis. Catalyzes the transfer of the glucose-1-phosphate moiety from UDP-Glc onto the carrier lipid undecaprenyl phosphate (C55-P), forming a phosphoanhydride bond yielding to glucosyl-pyrophosphoryl-undecaprenol (Glc-PP-C55). Also possesses a weak galactose-1-P transferase activity. This is UDP-glucose:undecaprenyl-phosphate glucose-1-phosphate transferase (pssY) from Caulobacter vibrioides (strain ATCC 19089 / CIP 103742 / CB 15) (Caulobacter crescentus).